The primary structure comprises 178 residues: Putative type II secretion system M-type protein YghD (178 aa).

Residues 1–39 (MLRDKFIHYFQQWRERQLSRGEHWLAQHLAGRSPREKGM) are Cytoplasmic-facing. The chain crosses the membrane as a helical span at residues 40-60 (LLAAVVFLFSVGYYVLIWQPL). Topologically, residues 61–178 (SERIEQQETI…NVQRLEFGRG (118 aa)) are periplasmic.

This sequence belongs to the GSP M family.

Its subcellular location is the cell inner membrane. In terms of biological role, involved in a type II secretion system (T2SS, formerly general secretion pathway, GSP) for the export of folded proteins across the outer membrane. This Escherichia coli (strain K12) protein is Putative type II secretion system M-type protein YghD (yghD).